The following is a 255-amino-acid chain: Uracil-DNA glycosylase (255 aa).

Residue Asp-90 is the Proton acceptor of the active site.

The protein belongs to the uracil-DNA glycosylase (UDG) superfamily. UNG family.

The protein localises to the host nucleus. The catalysed reaction is Hydrolyzes single-stranded DNA or mismatched double-stranded DNA and polynucleotides, releasing free uracil.. Excises uracil residues from the DNA which can arise as a result of misincorporation of dUMP residues by DNA polymerase or deamination of cytosines. Therefore may reduce deleterious uracil incorporation into the viral genome, particularly in terminally differentiated cells which lack DNA repair enzymes. The chain is Uracil-DNA glycosylase from Equine herpesvirus 2 (strain 86/87) (EHV-2).